The sequence spans 159 residues: IQ domain-containing protein J (159 aa).

Residues 47–67 (ESKVKIIQRAWREYLQRQEPL) form the IQ domain. The tract at residues 63–88 (RQEPLGKRSPSPPSVSSEKLSSSVSM) is disordered. Over residues 76–87 (SVSSEKLSSSVS) the composition is skewed to low complexity.

The sequence is that of IQ domain-containing protein J from Homo sapiens (Human).